The chain runs to 324 residues: Holliday junction branch migration complex subunit RuvB (324 aa).

The large ATPase domain (RuvB-L) stretch occupies residues methionine 1–tyrosine 168. ATP-binding positions include leucine 6, arginine 7, glycine 48, lysine 51, threonine 52, threonine 53, glutamate 115–phenylalanine 117, arginine 158, tyrosine 168, and arginine 205. Threonine 52 is a Mg(2+) binding site. The interval threonine 169–glycine 239 is small ATPAse domain (RuvB-S). The interval glutamate 242–proline 324 is head domain (RuvB-H). Residues arginine 297 and arginine 302 each coordinate DNA.

It belongs to the RuvB family. Homohexamer. Forms an RuvA(8)-RuvB(12)-Holliday junction (HJ) complex. HJ DNA is sandwiched between 2 RuvA tetramers; dsDNA enters through RuvA and exits via RuvB. An RuvB hexamer assembles on each DNA strand where it exits the tetramer. Each RuvB hexamer is contacted by two RuvA subunits (via domain III) on 2 adjacent RuvB subunits; this complex drives branch migration. In the full resolvosome a probable DNA-RuvA(4)-RuvB(12)-RuvC(2) complex forms which resolves the HJ.

It localises to the cytoplasm. The enzyme catalyses ATP + H2O = ADP + phosphate + H(+). The ATPase activity of RuvB is enhanced by RuvA. Functionally, the RuvA-RuvB-RuvC complex processes Holliday junction (HJ) DNA during genetic recombination and DNA repair, while the RuvA-RuvB complex plays an important role in the rescue of blocked DNA replication forks via replication fork reversal (RFR). RuvA specifically binds to HJ cruciform DNA, conferring on it an open structure. The RuvB hexamer acts as an ATP-dependent pump, pulling dsDNA into and through the RuvAB complex. RuvB forms 2 homohexamers on either side of HJ DNA bound by 1 or 2 RuvA tetramers; 4 subunits per hexamer contact DNA at a time. Coordinated motions by a converter formed by DNA-disengaged RuvB subunits stimulates ATP hydrolysis and nucleotide exchange. Immobilization of the converter enables RuvB to convert the ATP-contained energy into a lever motion, pulling 2 nucleotides of DNA out of the RuvA tetramer per ATP hydrolyzed, thus driving DNA branch migration. The RuvB motors rotate together with the DNA substrate, which together with the progressing nucleotide cycle form the mechanistic basis for DNA recombination by continuous HJ branch migration. Branch migration allows RuvC to scan DNA until it finds its consensus sequence, where it cleaves and resolves cruciform DNA. In terms of biological role, has Mg(2+)-, DNA-dependent ATPase activity; dsDNA and supercoiled DNA but not ssDNA stimulate activity. Binds to linear dsDNA in the absence of ATP or ATP-gamma-S. This subunit can promote Holliday junction migration alone in vitro. Partially complements an E.coli deletion for UV sensitivity. The protein is Holliday junction branch migration complex subunit RuvB of Thermus thermophilus.